The chain runs to 273 residues: Dermonecrotic toxin LsaSicTox-alphaIB1aiii (273 aa).

H5 is a catalytic residue. Mg(2+) contacts are provided by E25 and D27. The Nucleophile role is filled by H41. Cystine bridges form between C45-C51 and C47-C190. A Mg(2+)-binding site is contributed by D85.

It belongs to the arthropod phospholipase D family. Class II subfamily. It depends on Mg(2+) as a cofactor. As to expression, expressed by the venom gland.

It is found in the secreted. The enzyme catalyses an N-(acyl)-sphingosylphosphocholine = an N-(acyl)-sphingosyl-1,3-cyclic phosphate + choline. It carries out the reaction an N-(acyl)-sphingosylphosphoethanolamine = an N-(acyl)-sphingosyl-1,3-cyclic phosphate + ethanolamine. The catalysed reaction is a 1-acyl-sn-glycero-3-phosphocholine = a 1-acyl-sn-glycero-2,3-cyclic phosphate + choline. It catalyses the reaction a 1-acyl-sn-glycero-3-phosphoethanolamine = a 1-acyl-sn-glycero-2,3-cyclic phosphate + ethanolamine. In terms of biological role, dermonecrotic toxins cleave the phosphodiester linkage between the phosphate and headgroup of certain phospholipids (sphingolipid and lysolipid substrates), forming an alcohol (often choline) and a cyclic phosphate. This toxin acts on sphingomyelin (SM). It may also act on ceramide phosphoethanolamine (CPE), lysophosphatidylcholine (LPC) and lysophosphatidylethanolamine (LPE), but not on lysophosphatidylserine (LPS), and lysophosphatidylglycerol (LPG). It acts by transphosphatidylation, releasing exclusively cyclic phosphate products as second products. Induces dermonecrosis, hemolysis, increased vascular permeability, edema, inflammatory response, and platelet aggregation. This is Dermonecrotic toxin LsaSicTox-alphaIB1aiii from Loxosceles sabina (Tucson recluse spider).